Reading from the N-terminus, the 330-residue chain is tRNA-modifying protein YgfZ (330 aa).

Folate-binding residues include tryptophan 28 and tryptophan 190.

It belongs to the tRNA-modifying YgfZ family.

Its subcellular location is the cytoplasm. In terms of biological role, folate-binding protein involved in regulating the level of ATP-DnaA and in the modification of some tRNAs. It is probably a key factor in regulatory networks that act via tRNA modification, such as initiation of chromosomal replication. The chain is tRNA-modifying protein YgfZ from Yersinia pseudotuberculosis serotype IB (strain PB1/+).